A 131-amino-acid chain; its full sequence is Arsenate reductase (131 aa).

Catalysis depends on nucleophile residues cysteine 10, cysteine 82, and cysteine 89. 2 disulfides stabilise this stretch: cysteine 10/cysteine 82 and cysteine 82/cysteine 89.

Belongs to the low molecular weight phosphotyrosine protein phosphatase family. Thioredoxin-coupled ArsC subfamily.

The protein localises to the cytoplasm. It carries out the reaction arsenate + [thioredoxin]-dithiol + H(+) = arsenite + [thioredoxin]-disulfide + H2O. Its function is as follows. Catalyzes the reduction of arsenate [As(V)] to arsenite [As(III)]. This is Arsenate reductase from Staphylococcus xylosus.